Reading from the N-terminus, the 226-residue chain is Uracil-DNA glycosylase (226 aa).

Aspartate 65 serves as the catalytic Proton acceptor.

This sequence belongs to the uracil-DNA glycosylase (UDG) superfamily. UNG family.

It localises to the cytoplasm. It carries out the reaction Hydrolyzes single-stranded DNA or mismatched double-stranded DNA and polynucleotides, releasing free uracil.. Its function is as follows. Excises uracil residues from the DNA which can arise as a result of misincorporation of dUMP residues by DNA polymerase or due to deamination of cytosine. This is Uracil-DNA glycosylase from Enterococcus faecalis (strain ATCC 700802 / V583).